A 224-amino-acid polypeptide reads, in one-letter code: MVNLGNDWDELLKEEFEKDYYLNLRKFLIEEYKTRQIFPNMHNIYEALKHTSYKDTKVLILGQDPYHGDNQAHGLAFSVQPQVKTPPSLLNMYKELKDDLGCFIPNNGYLMPWADQGVLLLNTALTVRAHEANSHKNKGWEIFTDRVISILSEREDPVIFVLWGSNARKKVELIDTSKHYILEAPHPSPLSASKGFFGCKHFSKINEILKKLGKEPINWQIENI.

Asp64 (proton acceptor) is an active-site residue.

This sequence belongs to the uracil-DNA glycosylase (UDG) superfamily. UNG family.

It is found in the cytoplasm. It carries out the reaction Hydrolyzes single-stranded DNA or mismatched double-stranded DNA and polynucleotides, releasing free uracil.. In terms of biological role, excises uracil residues from the DNA which can arise as a result of misincorporation of dUMP residues by DNA polymerase or due to deamination of cytosine. This Clostridioides difficile (strain 630) (Peptoclostridium difficile) protein is Uracil-DNA glycosylase.